Reading from the N-terminus, the 269-residue chain is Protein shisa-1 (269 aa).

The first 18 residues, 1-18 (MEFIVLLTVCALLGLSCG), serve as a signal peptide directing secretion. Residues 19–98 (QHGEYCHGWT…LPPTVPTYFP (80 aa)) are Extracellular-facing. Residues 99–119 (FLLVGSIFVSFVILGSLVGLC) form a helical membrane-spanning segment. Residues 120 to 269 (CCKCLKPEDD…TVCSGSPSKC (150 aa)) are Cytoplasmic-facing. The interval 129–167 (DTQVSGPAPIQSRLLDQDPSTDTSRHSSSSSASMPRPPI) is disordered. Low complexity predominate over residues 146-162 (DPSTDTSRHSSSSSASM).

Belongs to the shisa family. Interacts with immature forms of fzd8 and fgfr.

It is found in the endoplasmic reticulum. The protein resides in the membrane. Required for head formation during gastrulation. Functions as an inhibitor for the caudalizing signals wnt and fgf, does not inhibit bmp, activin and nodal signaling in head formation process. Induces retention of fzd8 in the endoplasmic reticulum and inhibits trafficking of fzd8 to the cell surface. The protein is Protein shisa-1 (shisa1) of Xenopus laevis (African clawed frog).